Here is a 126-residue protein sequence, read N- to C-terminus: MAKRIDHTGIMVRDINASITFYEEVLGMKLKDRITHTNGVIELAFLGFEDGPETEIELIQGYSSELPAEGKVHHIALLTDDIAAEYTKAEKMNAKFIDEEITTLPNGYRYFYIEGPDGEWIEFFQR.

The 123-residue stretch at 4 to 126 (RIDHTGIMVR…DGEWIEFFQR (123 aa)) folds into the VOC domain. Residues His-7, Glu-42, His-74, and Glu-122 each contribute to the a divalent metal cation site.

This sequence belongs to the glyoxalase I family.

This is an uncharacterized protein from Bacillus subtilis (strain 168).